A 283-amino-acid chain; its full sequence is Acetyl-coenzyme A carboxylase carboxyl transferase subunit beta (283 aa).

A CoA carboxyltransferase N-terminal domain is found at 23–283 (LWIKCPSCSE…DFLMAGKAAA (261 aa)). Residues Cys-27, Cys-30, Cys-46, and Cys-49 each contribute to the Zn(2+) site. The C4-type zinc-finger motif lies at 27–49 (CPSCSEMLFTKEYEDNLSVCPHC).

It belongs to the AccD/PCCB family. Acetyl-CoA carboxylase is a heterohexamer composed of biotin carboxyl carrier protein (AccB), biotin carboxylase (AccC) and two subunits each of ACCase subunit alpha (AccA) and ACCase subunit beta (AccD). Requires Zn(2+) as cofactor.

Its subcellular location is the cytoplasm. It catalyses the reaction N(6)-carboxybiotinyl-L-lysyl-[protein] + acetyl-CoA = N(6)-biotinyl-L-lysyl-[protein] + malonyl-CoA. The protein operates within lipid metabolism; malonyl-CoA biosynthesis; malonyl-CoA from acetyl-CoA: step 1/1. Functionally, component of the acetyl coenzyme A carboxylase (ACC) complex. Biotin carboxylase (BC) catalyzes the carboxylation of biotin on its carrier protein (BCCP) and then the CO(2) group is transferred by the transcarboxylase to acetyl-CoA to form malonyl-CoA. The chain is Acetyl-coenzyme A carboxylase carboxyl transferase subunit beta from Novosphingobium aromaticivorans (strain ATCC 700278 / DSM 12444 / CCUG 56034 / CIP 105152 / NBRC 16084 / F199).